A 614-amino-acid polypeptide reads, in one-letter code: DNA ligase (614 aa).

NAD(+) is bound by residues 29–33 and 73–74; these read DQDYD and SI. Residue Lys-111 is the N6-AMP-lysine intermediate of the active site. NAD(+) contacts are provided by Arg-127, Glu-158, and Lys-270. 4 residues coordinate Zn(2+): Cys-358, Cys-361, Cys-374, and Cys-380. The BRCT domain maps to 538 to 614; the sequence is TLTHELFDKK…MTETDYLSKI (77 aa).

Belongs to the NAD-dependent DNA ligase family. LigA subfamily. The cofactor is Mg(2+). Mn(2+) is required as a cofactor.

The catalysed reaction is NAD(+) + (deoxyribonucleotide)n-3'-hydroxyl + 5'-phospho-(deoxyribonucleotide)m = (deoxyribonucleotide)n+m + AMP + beta-nicotinamide D-nucleotide.. In terms of biological role, DNA ligase that catalyzes the formation of phosphodiester linkages between 5'-phosphoryl and 3'-hydroxyl groups in double-stranded DNA using NAD as a coenzyme and as the energy source for the reaction. It is essential for DNA replication and repair of damaged DNA. This chain is DNA ligase, found in Ruthia magnifica subsp. Calyptogena magnifica.